Consider the following 831-residue polypeptide: Glycerol-3-phosphate acyltransferase (831 aa).

The short motif at C304–M309 is the HXXXXD motif element. The disordered stretch occupies residues V801–S831.

It belongs to the GPAT/DAPAT family.

Its subcellular location is the cell inner membrane. The enzyme catalyses sn-glycerol 3-phosphate + an acyl-CoA = a 1-acyl-sn-glycero-3-phosphate + CoA. It functions in the pathway phospholipid metabolism; CDP-diacylglycerol biosynthesis; CDP-diacylglycerol from sn-glycerol 3-phosphate: step 1/3. In Yersinia pseudotuberculosis serotype IB (strain PB1/+), this protein is Glycerol-3-phosphate acyltransferase.